The following is a 365-amino-acid chain: DNA replication and repair protein RecF (365 aa).

30–37 (GDNGEGKT) is a binding site for ATP.

It belongs to the RecF family.

The protein resides in the cytoplasm. The RecF protein is involved in DNA metabolism; it is required for DNA replication and normal SOS inducibility. RecF binds preferentially to single-stranded, linear DNA. It also seems to bind ATP. The protein is DNA replication and repair protein RecF of Leptospira interrogans serogroup Icterohaemorrhagiae serovar copenhageni (strain Fiocruz L1-130).